We begin with the raw amino-acid sequence, 278 residues long: Hydroxyethylthiazole kinase (278 aa).

Met46 contributes to the substrate binding site. ATP is bound by residues Arg122 and Thr168. Residue Gly195 coordinates substrate.

The protein belongs to the Thz kinase family. Requires Mg(2+) as cofactor.

It catalyses the reaction 5-(2-hydroxyethyl)-4-methylthiazole + ATP = 4-methyl-5-(2-phosphooxyethyl)-thiazole + ADP + H(+). It functions in the pathway cofactor biosynthesis; thiamine diphosphate biosynthesis; 4-methyl-5-(2-phosphoethyl)-thiazole from 5-(2-hydroxyethyl)-4-methylthiazole: step 1/1. Catalyzes the phosphorylation of the hydroxyl group of 4-methyl-5-beta-hydroxyethylthiazole (THZ). The sequence is that of Hydroxyethylthiazole kinase from Chloroflexus aggregans (strain MD-66 / DSM 9485).